Here is a 666-residue protein sequence, read N- to C-terminus: MSDSHLTAFDKASKAGFIIALGIVYGDIGTSPLYTMQSLVENQGGVNQVSESFILGSISLIIWTLTLITTIKYVLIALKADNHHEGGIFSLFTLVRKISPWLIIPAMIGGATLLSDGALTPAVTVTSAIEGLKAVPGLSHIYQNQTNVIITTLVILIVLFGIQRFGTGFIGKIFGPVMFIWFSFLGVSGFFNTLGHLEIFKAINPYYALHLLFSPENHRGIFILGSIFLATTGAEALYSDLGHVGRGNIYVSWPFVKMCIVLSYCGQAAWILANKHSGIELNPFFASVPSQLRVYLVSLATLAAIIASQALISGSFTLISEAMRLKIFPLFRVTYPGANLGQLYIPVINWILFAVTSCTVLAFRTSAHMEAAYGLAITITMLMTTILLKYYLIKKGTRPILAHLAMAFFALVEFIFFLASAIKFMHGGYAVVILALAIVFVMFIWHAGTRIVFKYVKSLNLNDYKEQIKQLRDDVCFDLYQTNVVYLSNRMQDHMIDRSILYSILDKRPKRAQVYWFVNVQVTDEPYTAKYKVDMMGTDYMVRVNLYLGFRMPQTVPRYLRTIVQDLMESGRLPKQEQEYTITPGRDVGDFRFVLIEERVTNARQLSNFERFIMQTKASIKHVTASPMRWFGLQYSEVTLEVVPLILSDVLKLPIKELVPVEDSEA.

Helical transmembrane passes span 16–36 (GFII…LYTM), 58–78 (ISLI…LIAL), 98–118 (ISPW…SDGA), 141–161 (IYQN…VLFG), 165–185 (FGTG…FSFL), 221–241 (IFIL…YSDL), 253–273 (WPFV…WILA), 299–319 (LATL…FTLI), 343–363 (LYIP…VLAF), 373–393 (YGLA…YYLI), 399–419 (PILA…FFLA), and 424–444 (FMHG…VMFI).

Belongs to the HAK/KUP transporter (TC 2.A.72) family.

The protein localises to the cell membrane. The catalysed reaction is K(+)(in) + H(+)(in) = K(+)(out) + H(+)(out). In terms of biological role, transport of potassium into the cell. Likely operates as a K(+):H(+) symporter. The polypeptide is Probable potassium transport system protein Kup (Streptococcus pyogenes serotype M28 (strain MGAS6180)).